The sequence spans 696 residues: Gametogenetin-binding protein 2 (696 aa).

Phosphoserine is present on residues Ser360 and Ser602.

Interacts with isoform 1 of GGN. As to expression, testis-specific.

It is found in the cytoplasmic vesicle. Functionally, may be involved in spermatogenesis. This chain is Gametogenetin-binding protein 2 (Ggnbp2), found in Mus musculus (Mouse).